The chain runs to 194 residues: Mitochondrial import inner membrane translocase subunit Tim22 (194 aa).

2 cysteine pairs are disulfide-bonded: Cys-69-Cys-141 and Cys-160-Cys-179. Helical transmembrane passes span 74-94 (ALACVGGFVLGGAFGVFTAGI), 123-143 (MSYAKNFAIVGAMFSCTECLV), and 170-190 (AGLKAGVIGCGGFAAFSAAID).

This sequence belongs to the Tim17/Tim22/Tim23 family. In terms of assembly, component of the TIM22 complex, whose core is composed of TIMM22, associated with peripheral protein FXC1/TIMM10B and the 70 kDa heterohexamer. In most cases, the 70 kDa complex is composed of TIMM9 and TIMM10 (TIMM10A or TIMM10B). A small fraction of the 70 kDa complex is composed of TIMM8 (TIMM8A/DDP1 or TIMM8B/DDP2) and TIMM13. The TIM22 complex also contains AGK and TIMM29. Interacts directly with TIMM9, TIMM10A and FXC1/TIMM10B. Interacts (when oxidized) with TIMM29; interaction is direct. Post-translationally, disulfide bonds promote efficient assembly of the TIM22 complex.

The protein resides in the mitochondrion inner membrane. Essential core component of the TIM22 complex, a complex that mediates the import and insertion of multi-pass transmembrane proteins into the mitochondrial inner membrane. In the TIM22 complex, it constitutes the voltage-activated and signal-gated channel. Forms a twin-pore translocase that uses the membrane potential as external driving force in 2 voltage-dependent steps. The chain is Mitochondrial import inner membrane translocase subunit Tim22 (TIMM22) from Bos taurus (Bovine).